The chain runs to 286 residues: D-tagatose-1,6-bisphosphate aldolase subunit KbaY (286 aa).

Catalysis depends on Asp-82, which acts as the Proton donor. Residues His-83 and His-180 each coordinate Zn(2+). Dihydroxyacetone phosphate is bound at residue Gly-181. His-208 serves as a coordination point for Zn(2+). Dihydroxyacetone phosphate contacts are provided by residues 209–211 (GAS) and 230–233 (NVAT).

It belongs to the class II fructose-bisphosphate aldolase family. TagBP aldolase KbaY subfamily. Homotetramer. Forms a complex with KbaZ. Zn(2+) serves as cofactor.

It carries out the reaction D-tagatofuranose 1,6-bisphosphate = D-glyceraldehyde 3-phosphate + dihydroxyacetone phosphate. Its pathway is carbohydrate metabolism; D-tagatose 6-phosphate degradation; D-glyceraldehyde 3-phosphate and glycerone phosphate from D-tagatose 6-phosphate: step 2/2. In terms of biological role, catalytic subunit of the tagatose-1,6-bisphosphate aldolase KbaYZ, which catalyzes the reversible aldol condensation of dihydroxyacetone phosphate (DHAP or glycerone-phosphate) with glyceraldehyde 3-phosphate (G3P) to produce tagatose 1,6-bisphosphate (TBP). Requires KbaZ subunit for full activity and stability. This chain is D-tagatose-1,6-bisphosphate aldolase subunit KbaY, found in Escherichia coli O45:K1 (strain S88 / ExPEC).